We begin with the raw amino-acid sequence, 992 residues long: UPF0182 protein MT3285 (992 aa).

Transmembrane regions (helical) follow at residues 17 to 39 (RILI…LIDA), 59 to 81 (LATR…FGGL), 113 to 135 (LVGI…SYWA), 169 to 191 (LMLS…AHYI), 212 to 229 (LVSL…AYWL), 255 to 277 (VLPA…FSAI), and 284 to 306 (IPAI…WPLI). The segment at 906 to 938 (PTEAAVPPSPAANPPPPASGPQPPPVTAAPPVP) is disordered. The segment covering 912 to 938 (PPSPAANPPPPASGPQPPPVTAAPPVP) has biased composition (pro residues).

It belongs to the UPF0182 family.

It localises to the cell membrane. The sequence is that of UPF0182 protein MT3285 from Mycobacterium tuberculosis (strain CDC 1551 / Oshkosh).